A 695-amino-acid polypeptide reads, in one-letter code: UvrABC system protein B (695 aa).

Residues 25–176 (KSILEGHRFQ…NQREVLRDLA (152 aa)) enclose the Helicase ATP-binding domain. 38–45 (GATGTGKT) lines the ATP pocket. The short motif at 91–114 (YYDYYQPEAYVPSTDTYIAKSSSI) is the Beta-hairpin element. Residues 454–617 (LLGEIYLRLE…ITPKPIIKKN (164 aa)) enclose the Helicase C-terminal domain. The 36-residue stretch at 652–687 (PELIGQLELKMKAAAKNLEFEEAAQLRDQIKKLRQR) folds into the UVR domain.

Belongs to the UvrB family. As to quaternary structure, forms a heterotetramer with UvrA during the search for lesions. Interacts with UvrC in an incision complex.

It localises to the cytoplasm. Functionally, the UvrABC repair system catalyzes the recognition and processing of DNA lesions. A damage recognition complex composed of 2 UvrA and 2 UvrB subunits scans DNA for abnormalities. Upon binding of the UvrA(2)B(2) complex to a putative damaged site, the DNA wraps around one UvrB monomer. DNA wrap is dependent on ATP binding by UvrB and probably causes local melting of the DNA helix, facilitating insertion of UvrB beta-hairpin between the DNA strands. Then UvrB probes one DNA strand for the presence of a lesion. If a lesion is found the UvrA subunits dissociate and the UvrB-DNA preincision complex is formed. This complex is subsequently bound by UvrC and the second UvrB is released. If no lesion is found, the DNA wraps around the other UvrB subunit that will check the other stand for damage. The chain is UvrABC system protein B from Synechococcus sp. (strain JA-3-3Ab) (Cyanobacteria bacterium Yellowstone A-Prime).